We begin with the raw amino-acid sequence, 184 residues long: (2E)-enoyl-[ACP] glycyltransferase (184 aa).

The protein belongs to the FcoT family.

It carries out the reaction a (3R)-3-[(carboxymethyl)amino]fatty acid + holo-[ACP] + H(+) = a (2E)-enoyl-[ACP] + glycine + H2O. The enzyme catalyses (3R)-3-[(carboxylmethyl)amino]decanoate + holo-[ACP] + H(+) = (2E)-decenoyl-[ACP] + glycine + H2O. Functionally, involved in the biosynthesis of a unique class of isonitrile lipopeptides (INLPs) that seem to play a role in metal acquisition in M.marinum. Catalyzes a Michael addition of glycine to the beta-position of an alpha,beta-unsaturated fatty acyl-[ACP], producing a (3R)-3-[(carboxymethyl)amino]fatty acid. Acts on the (2E)-decenoyl moiety loaded on the acyl-carrier protein MmaB, forming the product (3R)-3-[(carboxymethyl)amino]decanoate released from MmaB. In Mycobacterium marinum (strain ATCC BAA-535 / M), this protein is (2E)-enoyl-[ACP] glycyltransferase.